The primary structure comprises 452 residues: UPF0210 protein Hore_14430 (452 aa).

This sequence belongs to the UPF0210 family. Homodimer.

In Halothermothrix orenii (strain H 168 / OCM 544 / DSM 9562), this protein is UPF0210 protein Hore_14430.